Here is a 394-residue protein sequence, read N- to C-terminus: Elongation factor Tu (394 aa).

A tr-type G domain is found at 10–205; that stretch reads KPHMNVGTIG…SMDNYFDLPE (196 aa). The G1 stretch occupies residues 19-26; that stretch reads GHVDHGKT. Residue 19-26 coordinates GTP; it reads GHVDHGKT. Thr26 is a binding site for Mg(2+). A G2 region spans residues 61–65; the sequence is GITIN. Residues 82–85 are G3; it reads DCPG. GTP is bound by residues 82-86 and 137-140; these read DCPGH and NKLD. Residues 137-140 form a G4 region; that stretch reads NKLD. A G5 region spans residues 173–175; it reads SAF.

This sequence belongs to the TRAFAC class translation factor GTPase superfamily. Classic translation factor GTPase family. EF-Tu/EF-1A subfamily. As to quaternary structure, monomer.

The protein resides in the cytoplasm. The catalysed reaction is GTP + H2O = GDP + phosphate + H(+). Functionally, GTP hydrolase that promotes the GTP-dependent binding of aminoacyl-tRNA to the A-site of ribosomes during protein biosynthesis. The protein is Elongation factor Tu of Borreliella afzelii (strain PKo) (Borrelia afzelii).